A 410-amino-acid polypeptide reads, in one-letter code: 2-oxoisovalerate dehydrogenase subunit alpha (410 aa).

This sequence belongs to the BCKDHA family. Heterodimer of an alpha and a beta chain. Thiamine diphosphate is required as a cofactor.

The catalysed reaction is N(6)-[(R)-lipoyl]-L-lysyl-[protein] + 3-methyl-2-oxobutanoate + H(+) = N(6)-[(R)-S(8)-2-methylpropanoyldihydrolipoyl]-L-lysyl-[protein] + CO2. Functionally, the branched-chain alpha-keto dehydrogenase complex catalyzes the overall conversion of alpha-keto acids to acyl-CoA and CO(2). It contains multiple copies of three enzymatic components: branched-chain alpha-keto acid decarboxylase (E1), lipoamide acyltransferase (E2) and lipoamide dehydrogenase (E3). The polypeptide is 2-oxoisovalerate dehydrogenase subunit alpha (bkdA1) (Pseudomonas putida (Arthrobacter siderocapsulatus)).